Consider the following 436-residue polypeptide: Trigger factor (436 aa).

The PPIase FKBP-type domain maps to 161–246; it reads EDQLNIDFVG…VNTVSEPKLP (86 aa).

This sequence belongs to the FKBP-type PPIase family. Tig subfamily.

It localises to the cytoplasm. It catalyses the reaction [protein]-peptidylproline (omega=180) = [protein]-peptidylproline (omega=0). In terms of biological role, involved in protein export. Acts as a chaperone by maintaining the newly synthesized protein in an open conformation. Functions as a peptidyl-prolyl cis-trans isomerase. This chain is Trigger factor, found in Pseudomonas syringae pv. syringae (strain B728a).